A 100-amino-acid polypeptide reads, in one-letter code: Elevenin (100 aa).

Residues methionine 1–alanine 24 form the signal peptide. Residues cysteine 29 and cysteine 38 are joined by a disulfide bond. A propeptide spanning residues lysine 44–aspartate 100 is cleaved from the precursor.

Belongs to the elevenin family. Monomer. In terms of tissue distribution, expressed by the venom duct.

It localises to the secreted. Its function is as follows. May mimic the function of prey elevenin neuropeptide. In vivo, intracranial injection in mice induces hyperactivity. This Conus ammiralis (Admiral cone) protein is Elevenin.